Reading from the N-terminus, the 262-residue chain is Tropinone reductase homolog At2g29290 (262 aa).

13 to 37 (LVTGGTKGIGEAVVEELSILGARVH) contacts NADP(+). A substrate-binding site is contributed by S146. The active-site Proton acceptor is Y159.

Belongs to the short-chain dehydrogenases/reductases (SDR) family. SDR65C subfamily.

The sequence is that of Tropinone reductase homolog At2g29290 from Arabidopsis thaliana (Mouse-ear cress).